Consider the following 451-residue polypeptide: Clusterin (451 aa).

An N-terminal signal peptide occupies residues 1-18 (MELPLLALLSLGLVCQGG). 5 disulfides stabilise this stretch: C98-C314, C109-C306, C112-C303, C117-C296, and C125-C286. N99, N141, N278, N355, N375, and N447 each carry an N-linked (GlcNAc...) asparagine glycan.

The protein belongs to the clusterin family. Antiparallel disulfide-linked heterodimer of an alpha chain and a beta chain. Self-associates and forms higher oligomers. Interacts with a broad range of misfolded proteins. In terms of processing, proteolytically cleaved on its way through the secretory system, probably within the Golgi lumen. Post-translationally, polyubiquitinated, leading to proteasomal degradation.

It is found in the secreted. Its subcellular location is the cytoplasmic vesicle. The protein localises to the secretory vesicle. The protein resides in the chromaffin granule. It localises to the nucleus. It is found in the cytoplasm. Its subcellular location is the mitochondrion membrane. The protein localises to the cytosol. The protein resides in the endoplasmic reticulum. Functionally, functions as extracellular chaperone that prevents aggregation of nonnative proteins. Prevents stress-induced aggregation of blood plasma proteins. Does not require ATP. Maintains partially unfolded proteins in a state appropriate for subsequent refolding by other chaperones, such as HSPA8/HSC70. Does not refold proteins by itself. Binding to cell surface receptors triggers internalization of the chaperone-client complex and subsequent lysosomal or proteasomal degradation. When secreted, protects cells against apoptosis and against cytolysis by complement: inhibits assembly of the complement membrane attack complex (MAC) by preventing polymerization of C9 pore component of the MAC complex. Intracellular forms interact with ubiquitin and SCF (SKP1-CUL1-F-box protein) E3 ubiquitin-protein ligase complexes and promote the ubiquitination and subsequent proteasomal degradation of target proteins. Modulates NF-kappa-B transcriptional activity. Promotes apoptosis when in the nucleus. Inhibits apoptosis when associated with the mitochondrial membrane by interference with BAX-dependent release of cytochrome c into the cytoplasm. Plays a role in the regulation of cell proliferation. The sequence is that of Clusterin (CLU) from Coturnix japonica (Japanese quail).